A 243-amino-acid polypeptide reads, in one-letter code: Voltage-gated monoatomic cation channel TMEM109 (243 aa).

A signal peptide spans 1 to 33 (MAGAHSTPLWSRHLLKAVLMVLVALFLVHSASA). Residues 34–83 (QSHREFASPGQQKKETSADILTQIGRSLKEMLDTWLGPETMHVISETLLQ) are Lumenal-facing. A helical membrane pass occupies residues 84–104 (VMWAISSAISVACFALSGIAA). Over 105–135 (QLLSALGLDGEQLTQGLKLSPSQVQTLLLWG) the chain is Cytoplasmic. Residues 136 to 156 (AAALVIYWLLSLLLGLVLALL) form a helical membrane-spanning segment. Topologically, residues 157–185 (GRILGGLKLVLFVAGFVALVRSVPDPSTR) are lumenal. The chain crosses the membrane as a helical span at residues 186–205 (ALMLLALLTLFALLSRLTGS). Residues 206 to 243 (RSSGSHLEAKVRGLERQIEELRGRQRRAAKMPRSMEEE) are Cytoplasmic-facing.

Homooligomer. Interacts with CRYAB; in the cellular response to DNA damage.

The protein resides in the nucleus outer membrane. It localises to the endoplasmic reticulum membrane. The protein localises to the sarcoplasmic reticulum membrane. The catalysed reaction is K(+)(in) = K(+)(out). It catalyses the reaction Ca(2+)(in) = Ca(2+)(out). Its function is as follows. Functions as a voltage-gated monoatomic cation channel permeable to both potassium and calcium. Plays a role in the cellular response to DNA damage. The chain is Voltage-gated monoatomic cation channel TMEM109 from Mus musculus (Mouse).